Reading from the N-terminus, the 142-residue chain is Transcriptional regulator MraZ (142 aa).

2 SpoVT-AbrB domains span residues alanine 5–glutamate 51 and alanine 77–threonine 120.

It belongs to the MraZ family. Forms oligomers.

It localises to the cytoplasm. The protein resides in the nucleoid. In Variovorax paradoxus (strain S110), this protein is Transcriptional regulator MraZ.